We begin with the raw amino-acid sequence, 432 residues long: Dihydroorotase (432 aa).

Zn(2+) is bound by residues His60 and His62. Residues 62–64 (HLR) and Asn94 each bind substrate. Positions 152, 179, and 232 each coordinate Zn(2+). Asn278 contributes to the substrate binding site. Asp305 contributes to the Zn(2+) binding site. Asp305 is a catalytic residue. Residues His309 and 323-324 (FG) contribute to the substrate site.

Belongs to the metallo-dependent hydrolases superfamily. DHOase family. Class I DHOase subfamily. Zn(2+) is required as a cofactor.

It catalyses the reaction (S)-dihydroorotate + H2O = N-carbamoyl-L-aspartate + H(+). It participates in pyrimidine metabolism; UMP biosynthesis via de novo pathway; (S)-dihydroorotate from bicarbonate: step 3/3. Its function is as follows. Catalyzes the reversible cyclization of carbamoyl aspartate to dihydroorotate. The polypeptide is Dihydroorotase (Elusimicrobium minutum (strain Pei191)).